The chain runs to 218 residues: MLTIDLGSLSYAEAEAVQTARLGEVSTGGEDTLYLVEHPPVITLGRNGGIENLHAGRGFLAERGIELAQSSRGGNITCHFPGQLVAYPVFRIERRPGGLRSFFHDLEEVVLRTLHTFGLEASRHEGRPGVWIDNRKICSIGVAVRRWTTYHGLALNVGRDLSLFNLITLCGLPDAEATSLHRELDDDSVTMQEVKDVLTRQFLAIFTHPAVAAGEAAL.

Residues 27 to 210 form the BPL/LPL catalytic domain; that stretch reads TGGEDTLYLV…QFLAIFTHPA (184 aa). Residues 72–79, 139–141, and 152–154 contribute to the substrate site; these read RGGNITCH, SIG, and GLA. C170 (acyl-thioester intermediate) is an active-site residue.

It belongs to the LipB family.

It localises to the cytoplasm. It carries out the reaction octanoyl-[ACP] + L-lysyl-[protein] = N(6)-octanoyl-L-lysyl-[protein] + holo-[ACP] + H(+). The protein operates within protein modification; protein lipoylation via endogenous pathway; protein N(6)-(lipoyl)lysine from octanoyl-[acyl-carrier-protein]: step 1/2. In terms of biological role, catalyzes the transfer of endogenously produced octanoic acid from octanoyl-acyl-carrier-protein onto the lipoyl domains of lipoate-dependent enzymes. Lipoyl-ACP can also act as a substrate although octanoyl-ACP is likely to be the physiological substrate. The protein is Octanoyltransferase of Nitratidesulfovibrio vulgaris (strain ATCC 29579 / DSM 644 / CCUG 34227 / NCIMB 8303 / VKM B-1760 / Hildenborough) (Desulfovibrio vulgaris).